The primary structure comprises 96 residues: uncharacterized protein (96 aa).

The signal sequence occupies residues 1–19 (MKFLSALLLIVLLISVVFG). A glycan (N-linked (GlcNAc...) asparagine) is linked at Asn-20. Over residues 27 to 46 (AWATTTTGGTTGSQTSPATH) the composition is skewed to low complexity. Residues 27–58 (AWATTTTGGTTGSQTSPATHGGHGGNGGNGHS) are disordered. Gly residues predominate over residues 47-56 (GGHGGNGGNG).

The protein resides in the secreted. This is an uncharacterized protein from Dictyostelium discoideum (Social amoeba).